Here is a 285-residue protein sequence, read N- to C-terminus: 2-dehydro-3-deoxyphosphooctonate aldolase (285 aa).

This sequence belongs to the KdsA family.

It is found in the cytoplasm. The enzyme catalyses D-arabinose 5-phosphate + phosphoenolpyruvate + H2O = 3-deoxy-alpha-D-manno-2-octulosonate-8-phosphate + phosphate. It participates in carbohydrate biosynthesis; 3-deoxy-D-manno-octulosonate biosynthesis; 3-deoxy-D-manno-octulosonate from D-ribulose 5-phosphate: step 2/3. Its pathway is bacterial outer membrane biogenesis; lipopolysaccharide biosynthesis. This is 2-dehydro-3-deoxyphosphooctonate aldolase from Acinetobacter baumannii (strain AB307-0294).